The primary structure comprises 427 residues: Probable threonylcarbamoyladenosine tRNA methylthiotransferase (427 aa).

Positions 12-118 constitute an MTTase N-terminal domain; that stretch reads MRVYVEGYGC…AGEILKNYVE (107 aa). [4Fe-4S] cluster contacts are provided by C21, C57, C86, C155, C159, and C162. Residues 141–370 form the Radical SAM core domain; it reads LKPSLITPLP…DKLRRELSYL (230 aa). The 55-residue stretch at 373-427 folds into the TRAM domain; it reads KKYIGKAMKVLVLDEGKGYTDNFKVVKFEGGEVGEFRKVKITDAKTFGLKGELIL.

The protein belongs to the methylthiotransferase family. CDKAL1 subfamily. [4Fe-4S] cluster is required as a cofactor.

It catalyses the reaction N(6)-L-threonylcarbamoyladenosine(37) in tRNA + (sulfur carrier)-SH + AH2 + 2 S-adenosyl-L-methionine = 2-methylsulfanyl-N(6)-L-threonylcarbamoyladenosine(37) in tRNA + (sulfur carrier)-H + 5'-deoxyadenosine + L-methionine + A + S-adenosyl-L-homocysteine + 2 H(+). Catalyzes the methylthiolation of N6-threonylcarbamoyladenosine (t(6)A), leading to the formation of 2-methylthio-N6-threonylcarbamoyladenosine (ms(2)t(6)A) at position 37 in tRNAs that read codons beginning with adenine. In Methanocaldococcus jannaschii (strain ATCC 43067 / DSM 2661 / JAL-1 / JCM 10045 / NBRC 100440) (Methanococcus jannaschii), this protein is Probable threonylcarbamoyladenosine tRNA methylthiotransferase.